We begin with the raw amino-acid sequence, 89 residues long: Large ribosomal subunit protein bL28 (89 aa).

Belongs to the bacterial ribosomal protein bL28 family.

This Chlamydia caviae (strain ATCC VR-813 / DSM 19441 / 03DC25 / GPIC) (Chlamydophila caviae) protein is Large ribosomal subunit protein bL28.